Here is a 260-residue protein sequence, read N- to C-terminus: Phosphate import ATP-binding protein PstB (260 aa).

The ABC transporter domain maps to 13–255; it reads MRAQGVNVFY…PKQERTKDYI (243 aa). ATP is bound at residue 45 to 52; that stretch reads GPSGCGKS.

The protein belongs to the ABC transporter superfamily. Phosphate importer (TC 3.A.1.7) family. In terms of assembly, the complex is composed of two ATP-binding proteins (PstB), two transmembrane proteins (PstC and PstA) and a solute-binding protein (PstS).

Its subcellular location is the cell inner membrane. It catalyses the reaction phosphate(out) + ATP + H2O = ADP + 2 phosphate(in) + H(+). Part of the ABC transporter complex PstSACB involved in phosphate import. Responsible for energy coupling to the transport system. This Sphingopyxis alaskensis (strain DSM 13593 / LMG 18877 / RB2256) (Sphingomonas alaskensis) protein is Phosphate import ATP-binding protein PstB.